Consider the following 320-residue polypeptide: Polyisoprenyl-teichoic acid--peptidoglycan teichoic acid transferase TagU (320 aa).

Topologically, residues 1–15 (MVSRTERKQHKKRRK) are cytoplasmic. A helical; Signal-anchor for type II membrane protein transmembrane segment spans residues 16–36 (WPFWLGGILLVLLLLISGGIF). The Extracellular portion of the chain corresponds to 37-320 (LIYNQVGAVV…SEITGHMQEQ (284 aa)).

This sequence belongs to the LytR/CpsA/Psr (LCP) family.

It localises to the cell membrane. It functions in the pathway cell wall biogenesis. May catalyze the final step in cell wall teichoic acid biosynthesis, the transfer of the anionic cell wall polymers (APs) from their lipid-linked precursor to the cell wall peptidoglycan (PG). This chain is Polyisoprenyl-teichoic acid--peptidoglycan teichoic acid transferase TagU, found in Oceanobacillus iheyensis (strain DSM 14371 / CIP 107618 / JCM 11309 / KCTC 3954 / HTE831).